Reading from the N-terminus, the 602-residue chain is Elongation factor 4 (602 aa).

One can recognise a tr-type G domain in the interval 6–188 (DHIRNFSIVA…AIVNKLPAPK (183 aa)). GTP-binding positions include 18 to 23 (DHGKST) and 135 to 138 (NKID).

It belongs to the TRAFAC class translation factor GTPase superfamily. Classic translation factor GTPase family. LepA subfamily.

Its subcellular location is the cell inner membrane. It catalyses the reaction GTP + H2O = GDP + phosphate + H(+). In terms of biological role, required for accurate and efficient protein synthesis under certain stress conditions. May act as a fidelity factor of the translation reaction, by catalyzing a one-codon backward translocation of tRNAs on improperly translocated ribosomes. Back-translocation proceeds from a post-translocation (POST) complex to a pre-translocation (PRE) complex, thus giving elongation factor G a second chance to translocate the tRNAs correctly. Binds to ribosomes in a GTP-dependent manner. The sequence is that of Elongation factor 4 from Brucella abortus (strain 2308).